A 323-amino-acid polypeptide reads, in one-letter code: Protein translocase subunit SecF (323 aa).

The next 6 helical transmembrane spans lie at 19–39 (GVIV…FKGF), 138–158 (ILSL…RYEW), 162–182 (LASV…VIVF), 189–209 (EVIA…IIIF), 244–264 (LTVF…IIGF), and 269–289 (LIGT…VALL).

This sequence belongs to the SecD/SecF family. SecF subfamily. In terms of assembly, forms a complex with SecD. Part of the essential Sec protein translocation apparatus which comprises SecA, SecYEG and auxiliary proteins SecDF-YajC and YidC.

The protein resides in the cell inner membrane. Functionally, part of the Sec protein translocase complex. Interacts with the SecYEG preprotein conducting channel. SecDF uses the proton motive force (PMF) to complete protein translocation after the ATP-dependent function of SecA. This chain is Protein translocase subunit SecF, found in Helicobacter pylori (strain ATCC 700392 / 26695) (Campylobacter pylori).